The sequence spans 65 residues: Large ribosomal subunit protein bL35 (65 aa).

Positions 1-29 (MPKMKTHSGAKKRFKLTGSGKVKRQQANR) are disordered.

It belongs to the bacterial ribosomal protein bL35 family.

This Kocuria rhizophila (strain ATCC 9341 / DSM 348 / NBRC 103217 / DC2201) protein is Large ribosomal subunit protein bL35.